The primary structure comprises 300 residues: Cation-efflux pump FieF (300 aa).

A run of 4 helical transmembrane segments spans residues 12-32, 40-60, 82-102, and 114-134; these read AALS…FAWW, LAAL…LFVV, AALA…LTGF, and PGLG…LVTF. The Zn(2+) site is built by D45 and D49. H153 and D157 together coordinate Zn(2+). The chain crosses the membrane as a helical span at residues 164 to 184; sequence ILIALALSWYGFHRADALFAL.

Belongs to the cation diffusion facilitator (CDF) transporter (TC 2.A.4) family. FieF subfamily. As to quaternary structure, homodimer.

Its subcellular location is the cell inner membrane. The enzyme catalyses Zn(2+)(in) + H(+)(out) = Zn(2+)(out) + H(+)(in). It catalyses the reaction Cd(2+)(in) + H(+)(out) = Cd(2+)(out) + H(+)(in). It carries out the reaction Fe(2+)(in) + H(+)(out) = Fe(2+)(out) + H(+)(in). In terms of biological role, divalent metal cation transporter which exports Zn(2+), Cd(2+) and possibly Fe(2+). May be involved in zinc and iron detoxification by efflux. The chain is Cation-efflux pump FieF from Yersinia enterocolitica serotype O:8 / biotype 1B (strain NCTC 13174 / 8081).